The chain runs to 554 residues: Glucose-6-phosphate isomerase (554 aa).

The active-site Proton donor is Glu359. Catalysis depends on residues His390 and Lys518.

The protein belongs to the GPI family.

It is found in the cytoplasm. It carries out the reaction alpha-D-glucose 6-phosphate = beta-D-fructose 6-phosphate. It functions in the pathway carbohydrate biosynthesis; gluconeogenesis. Its pathway is carbohydrate degradation; glycolysis; D-glyceraldehyde 3-phosphate and glycerone phosphate from D-glucose: step 2/4. Catalyzes the reversible isomerization of glucose-6-phosphate to fructose-6-phosphate. The protein is Glucose-6-phosphate isomerase of Ectopseudomonas mendocina (strain ymp) (Pseudomonas mendocina).